Reading from the N-terminus, the 774-residue chain is Neprilysin-2 (774 aa).

Residues 1-20 (MQTVIQNPNWWRRRNKLEKS) are Cytoplasmic-facing. Residues 21 to 41 (LLVSLGIMFVVLATGFGLWIG) form a helical; Signal-anchor for type II membrane protein membrane-spanning segment. Topologically, residues 42 to 774 (KVLRTSPPSN…MNPVQKCEVW (733 aa)) are extracellular. The segment at 50–79 (SNPQATALHGDSTTINQVPTGTASKGKSGD) is disordered. Polar residues predominate over residues 60–74 (DSTTINQVPTGTASK). Residues 83–774 (VCLTQECIHT…MNPVQKCEVW (692 aa)) form the Peptidase M13 domain. 5 cysteine pairs are disulfide-bonded: cysteine 84-cysteine 89, cysteine 107-cysteine 759, cysteine 115-cysteine 719, cysteine 171-cysteine 424, and cysteine 646-cysteine 771. 7 N-linked (GlcNAc...) asparagine glycosylation sites follow: asparagine 173, asparagine 239, asparagine 264, asparagine 305, asparagine 315, asparagine 358, and asparagine 554. Residue histidine 609 coordinates Zn(2+). Glutamate 610 is an active-site residue. Position 613 (histidine 613) interacts with Zn(2+). N-linked (GlcNAc...) asparagine glycosylation is present at asparagine 653. Position 671 (glutamate 671) interacts with Zn(2+). Aspartate 675 acts as the Proton donor in catalysis.

It belongs to the peptidase M13 family. Zn(2+) serves as cofactor. Post-translationally, N-glycosylated. In terms of processing, the soluble form is probably produced by proteolytic cleavage. In terms of tissue distribution, detected in the stellate cells in the main segment and the bar-shaped cells in the initial segment of male and female Malpighian tubules (at protein level). Expressed in the spermatheca (at protein level). Expressed in the somatic cyst cells of the testes, with increased expression at the tail end of elongating cysts. Expressed in the ovaries with strong expression in the posterior polar cells and in border cells of stage 8, 9, and 10 follicles. In adults and third-instar larvae, expressed in the brain, ventral ganglion, and stellate cells. Also expressed in the foregut and the imaginal disks (eye, antennal and leg) of third-instar larvae. In stage 17 embryos, expressed in the tracheal system, foregut, hindgut and epidermis. Also expressed in the stellate cell progenitors of the caudal visceral mesoderm in embryos.

Its subcellular location is the cell membrane. It localises to the secreted. The catalysed reaction is Preferential cleavage of polypeptides between hydrophobic residues, particularly with Phe or Tyr at P1'.. In terms of biological role, metalloendoprotease which cleaves peptides such as tachykinin peptide TK-2 at the amino side of hydrophobic residues. Functions in female fertility, embryogenesis and memory formation. Required in females for normal patterns of egg laying, probably due to its function in sperm retention and preventing sperm displacement by rival ejaculates. Also required for normal patterns of hatching due to its important role in early embryonic development. Required in the dorsal paired medial neurons for the proper formation of middle-term memory. Also required in the mushroom body neurons where it functions redundantly with neprilysins Nep3 and Nep4 in normal long-term memory formation. This Drosophila melanogaster (Fruit fly) protein is Neprilysin-2.